The primary structure comprises 244 residues: Uridylate kinase (244 aa).

16 to 19 (KLSG) contacts ATP. A UMP-binding site is contributed by Gly-58. ATP is bound by residues Gly-59 and Arg-63. UMP-binding positions include Asp-78 and 139–146 (VGAPYFTT). ATP-binding residues include Thr-166, Tyr-172, and Asp-175.

Belongs to the UMP kinase family. In terms of assembly, homohexamer.

The protein localises to the cytoplasm. It carries out the reaction UMP + ATP = UDP + ADP. It participates in pyrimidine metabolism; CTP biosynthesis via de novo pathway; UDP from UMP (UMPK route): step 1/1. Inhibited by UTP. Functionally, catalyzes the reversible phosphorylation of UMP to UDP. The chain is Uridylate kinase from Novosphingobium aromaticivorans (strain ATCC 700278 / DSM 12444 / CCUG 56034 / CIP 105152 / NBRC 16084 / F199).